A 385-amino-acid polypeptide reads, in one-letter code: Serpin-Z10 (385 aa).

Positions 333–357 are RCL; it reads GTEAAAVSVGVVSCTSFRRNPDFVA.

This sequence belongs to the serpin family.

Probable serine protease inhibitor. The polypeptide is Serpin-Z10 (Arabidopsis thaliana (Mouse-ear cress)).